The following is a 1579-amino-acid chain: DNA-directed RNA polymerase subunit beta' (1579 aa).

Cys65, Cys67, Cys80, and Cys83 together coordinate Zn(2+). Mg(2+) is bound by residues Asp601, Asp603, and Asp605. Residues Cys938, Cys1012, Cys1019, and Cys1022 each contribute to the Zn(2+) site.

This sequence belongs to the RNA polymerase beta' chain family. In terms of assembly, the RNAP catalytic core consists of 2 alpha, 1 beta, 1 beta' and 1 omega subunit. When a sigma factor is associated with the core the holoenzyme is formed, which can initiate transcription. The cofactor is Mg(2+). Requires Zn(2+) as cofactor.

It catalyses the reaction RNA(n) + a ribonucleoside 5'-triphosphate = RNA(n+1) + diphosphate. Functionally, DNA-dependent RNA polymerase catalyzes the transcription of DNA into RNA using the four ribonucleoside triphosphates as substrates. The sequence is that of DNA-directed RNA polymerase subunit beta' from Sulfurihydrogenibium sp. (strain YO3AOP1).